A 313-amino-acid chain; its full sequence is Cytochrome c biogenesis protein CcsA (313 aa).

Helical transmembrane passes span 13–35, 43–63, 67–87, 96–116, 142–162, 219–239, 252–269, and 280–300; these read ISFS…EIAG, GMIA…IYSG, LSNL…IHMI, FLSS…TSGL, MLLS…LLVI, VIGI…VWAN, ETWA…LHTR, and AIVA…VNLL.

This sequence belongs to the CcmF/CycK/Ccl1/NrfE/CcsA family. As to quaternary structure, may interact with Ccs1.

The protein localises to the plastid. The protein resides in the chloroplast thylakoid membrane. Required during biogenesis of c-type cytochromes (cytochrome c6 and cytochrome f) at the step of heme attachment. The chain is Cytochrome c biogenesis protein CcsA from Amborella trichopoda.